Consider the following 201-residue polypeptide: Large ribosomal subunit protein uL4 (201 aa).

The tract at residues 43–71 is disordered; the sequence is TRAQKTRSEVSGGGKKPWAQKGTGRARAG.

Belongs to the universal ribosomal protein uL4 family. As to quaternary structure, part of the 50S ribosomal subunit.

In terms of biological role, one of the primary rRNA binding proteins, this protein initially binds near the 5'-end of the 23S rRNA. It is important during the early stages of 50S assembly. It makes multiple contacts with different domains of the 23S rRNA in the assembled 50S subunit and ribosome. Functionally, forms part of the polypeptide exit tunnel. The protein is Large ribosomal subunit protein uL4 of Pseudoalteromonas translucida (strain TAC 125).